Here is a 494-residue protein sequence, read N- to C-terminus: DEAD-box ATP-dependent RNA helicase CshA (494 aa).

Residues 3 to 31 carry the Q motif motif; the sequence is ITFQDFNLSSDLMKAINRMGFEEATPIQA. A Helicase ATP-binding domain is found at 34–204; sequence IPLGLSNKDV…ERFMTEPEHV (171 aa). 47-54 is a binding site for ATP; sequence AQTGTGKT. The DEAD box motif lies at 152-155; sequence DEAD. In terms of domain architecture, Helicase C-terminal spans 215–375; that stretch reads NIQQFYLEVQ…RMKEPTLDEA (161 aa). The segment at 413–494 is required for dimerization or oligomerization; the sequence is VTVVAAAIKM…SGDRRQKKSY (82 aa). A disordered region spans residues 429 to 494; the sequence is DTPVRLTDEA…SGDRRQKKSY (66 aa). Positions 443 to 452 are enriched in basic residues; that stretch reads KRYKNQRSSK. The span at 473–488 shows a compositional bias: basic and acidic residues; sequence SYDKKRSNDRRSSGDR.

The protein belongs to the DEAD box helicase family. CshA subfamily. In terms of assembly, homodimer or oligomer. May interact with RNA helicases CshB and DbpA (DeaD). Probably a component of the RNA degradosome complex composed of rny, rnjA, rnjB, pnp, pfkA and eno, and possibly also rnpA (although rnjA and rnjB's presence is unclear). Interacts with ribosomal proteins L1 and L3 (rplA and rplC) and the protein component of RNase RnpA. Interacts with the RNA polymerase core. The cofactor is Mg(2+).

It is found in the cytoplasm. The protein resides in the nucleoid. It localises to the cell membrane. It catalyses the reaction ATP + H2O = ADP + phosphate + H(+). Its activity is regulated as follows. RNA helicase activity is inhibited by EDTA. Functionally, the most abundant DEAD-box RNA helicase. An ATP-dependent RNA helicase with RNA-dependent ATPase activity. May work in conjunction with the cold shock proteins to ensure proper initiation of transcription at low and optimal temperatures. In vitro, unwinds dsRNA in both 5'- and 3'- directions. Plays a role in ribosomal 50S subunit assembly. Its deletion leads to changes in mRNA levels for over 200 transcripts. This is DEAD-box ATP-dependent RNA helicase CshA from Bacillus subtilis (strain 168).